The sequence spans 378 residues: Phosphoserine aminotransferase (378 aa).

Arginine 53 lines the L-glutamate pocket. The pyridoxal 5'-phosphate site is built by tryptophan 117, threonine 167, aspartate 190, and glutamine 213. An N6-(pyridoxal phosphate)lysine modification is found at lysine 214. 255–256 lines the pyridoxal 5'-phosphate pocket; that stretch reads NT.

This sequence belongs to the class-V pyridoxal-phosphate-dependent aminotransferase family. SerC subfamily. Homodimer. The cofactor is pyridoxal 5'-phosphate.

The protein resides in the cytoplasm. The catalysed reaction is O-phospho-L-serine + 2-oxoglutarate = 3-phosphooxypyruvate + L-glutamate. It catalyses the reaction 4-(phosphooxy)-L-threonine + 2-oxoglutarate = (R)-3-hydroxy-2-oxo-4-phosphooxybutanoate + L-glutamate. Its pathway is amino-acid biosynthesis; L-serine biosynthesis; L-serine from 3-phospho-D-glycerate: step 2/3. The protein operates within cofactor biosynthesis; pyridoxine 5'-phosphate biosynthesis; pyridoxine 5'-phosphate from D-erythrose 4-phosphate: step 3/5. Its function is as follows. Catalyzes the reversible conversion of 3-phosphohydroxypyruvate to phosphoserine and of 3-hydroxy-2-oxo-4-phosphonooxybutanoate to phosphohydroxythreonine. This Ralstonia nicotianae (strain ATCC BAA-1114 / GMI1000) (Ralstonia solanacearum) protein is Phosphoserine aminotransferase.